The following is a 294-amino-acid chain: 4-hydroxy-tetrahydrodipicolinate synthase (294 aa).

Pyruvate is bound at residue T48. The active-site Proton donor/acceptor is the Y136. The active-site Schiff-base intermediate with substrate is K164. V206 is a binding site for pyruvate.

This sequence belongs to the DapA family. Homotetramer; dimer of dimers.

The protein resides in the cytoplasm. The enzyme catalyses L-aspartate 4-semialdehyde + pyruvate = (2S,4S)-4-hydroxy-2,3,4,5-tetrahydrodipicolinate + H2O + H(+). The protein operates within amino-acid biosynthesis; L-lysine biosynthesis via DAP pathway; (S)-tetrahydrodipicolinate from L-aspartate: step 3/4. In terms of biological role, catalyzes the condensation of (S)-aspartate-beta-semialdehyde [(S)-ASA] and pyruvate to 4-hydroxy-tetrahydrodipicolinate (HTPA). This is 4-hydroxy-tetrahydrodipicolinate synthase from Desulforudis audaxviator (strain MP104C).